Here is a 347-residue protein sequence, read N- to C-terminus: Histone deacetylase 11 (347 aa).

The segment at 14–326 is histone deacetylase; it reads TRWPIVYSPR…LNLFGLGLIG (313 aa). Residue H143 is part of the active site.

This sequence belongs to the histone deacetylase family. Interacts with HDAC6. In terms of tissue distribution, weakly expressed in most tissues. Strongly expressed in brain, heart, skeletal muscle, kidney and testis.

The protein localises to the nucleus. It catalyses the reaction N(6)-acetyl-L-lysyl-[histone] + H2O = L-lysyl-[histone] + acetate. In terms of biological role, responsible for the deacetylation of lysine residues on the N-terminal part of the core histones (H2A, H2B, H3 and H4). Histone deacetylation gives a tag for epigenetic repression and plays an important role in transcriptional regulation, cell cycle progression and developmental events. Histone deacetylases act via the formation of large multiprotein complexes. The chain is Histone deacetylase 11 (HDAC11) from Homo sapiens (Human).